The primary structure comprises 640 residues: 1,4-alpha-glucan branching enzyme GlgB (640 aa).

Asp-318 functions as the Nucleophile in the catalytic mechanism. Catalysis depends on Glu-371, which acts as the Proton donor.

This sequence belongs to the glycosyl hydrolase 13 family. GlgB subfamily. In terms of assembly, monomer.

The enzyme catalyses Transfers a segment of a (1-&gt;4)-alpha-D-glucan chain to a primary hydroxy group in a similar glucan chain.. The protein operates within glycan biosynthesis; glycogen biosynthesis. In terms of biological role, catalyzes the formation of the alpha-1,6-glucosidic linkages in glycogen by scission of a 1,4-alpha-linked oligosaccharide from growing alpha-1,4-glucan chains and the subsequent attachment of the oligosaccharide to the alpha-1,6 position. This Francisella tularensis subsp. novicida (strain U112) protein is 1,4-alpha-glucan branching enzyme GlgB.